A 282-amino-acid polypeptide reads, in one-letter code: Bis(5'-nucleosyl)-tetraphosphatase, symmetrical (282 aa).

This sequence belongs to the Ap4A hydrolase family. Monomer.

The catalysed reaction is P(1),P(4)-bis(5'-adenosyl) tetraphosphate + H2O = 2 ADP + 2 H(+). Functionally, hydrolyzes diadenosine 5',5'''-P1,P4-tetraphosphate to yield ADP. In Escherichia coli O157:H7, this protein is Bis(5'-nucleosyl)-tetraphosphatase, symmetrical.